The sequence spans 224 residues: MPISKMPVESMPREKLLSRGPDSLSDAELLAIFLRTGTQGMNVLELSDKLIKDFGSLRHLFSATEAEFCAHKGMGQAKYVQLQAVLEMTQRYLAETLSRGDALTSPSHTKLYLSSILRDRQREAFYILFLDNQNRVIKDEVMFEGTIDAASVYPREVVKRALHHNAAALILAHNHPSGVAEPSQADRRITRRLTDALALVDIRILDHFVVGDGEVISFAERGWI.

The interval 1–21 (MPISKMPVESMPREKLLSRGP) is disordered. The MPN domain maps to 102-224 (ALTSPSHTKL…VISFAERGWI (123 aa)). Zn(2+) contacts are provided by His-173, His-175, and Asp-186. A JAMM motif motif is present at residues 173–186 (HNHPSGVAEPSQAD).

Belongs to the UPF0758 family.

The protein is UPF0758 protein VS_0182 of Vibrio atlanticus (strain LGP32) (Vibrio splendidus (strain Mel32)).